We begin with the raw amino-acid sequence, 286 residues long: 4-hydroxybenzoate octaprenyltransferase (286 aa).

A run of 7 helical transmembrane segments spans residues 20–40 (IGTLLLMWPCLMALVLAAGGM), 43–63 (LKVLVIFIIGVVVMRACGCII), 96–116 (LFVVMGLIAFGLVLMLNPLVV), 142–162 (FLGVVWSWSIPMAYAAQTGTV), 167–187 (WWLFAANWCWTVAYDTMYAMV), 210–230 (QVIALFQLAALACFIIAGWAA), and 234–254 (LVYALGIITFVGFSLYQQKLI).

Belongs to the UbiA prenyltransferase family. Mg(2+) serves as cofactor.

It localises to the cell inner membrane. It catalyses the reaction all-trans-octaprenyl diphosphate + 4-hydroxybenzoate = 4-hydroxy-3-(all-trans-octaprenyl)benzoate + diphosphate. It participates in cofactor biosynthesis; ubiquinone biosynthesis. In terms of biological role, catalyzes the prenylation of para-hydroxybenzoate (PHB) with an all-trans polyprenyl group. Mediates the second step in the final reaction sequence of ubiquinone-8 (UQ-8) biosynthesis, which is the condensation of the polyisoprenoid side chain with PHB, generating the first membrane-bound Q intermediate 3-octaprenyl-4-hydroxybenzoate. This Shewanella woodyi (strain ATCC 51908 / MS32) protein is 4-hydroxybenzoate octaprenyltransferase.